Here is a 283-residue protein sequence, read N- to C-terminus: Elongation factor Ts (283 aa).

The tract at residues threonine 82–valine 85 is involved in Mg(2+) ion dislocation from EF-Tu.

It belongs to the EF-Ts family.

It localises to the cytoplasm. Functionally, associates with the EF-Tu.GDP complex and induces the exchange of GDP to GTP. It remains bound to the aminoacyl-tRNA.EF-Tu.GTP complex up to the GTP hydrolysis stage on the ribosome. The sequence is that of Elongation factor Ts from Photorhabdus laumondii subsp. laumondii (strain DSM 15139 / CIP 105565 / TT01) (Photorhabdus luminescens subsp. laumondii).